Consider the following 72-residue polypeptide: Exodeoxyribonuclease 7 small subunit (72 aa).

Belongs to the XseB family. In terms of assembly, heterooligomer composed of large and small subunits.

It localises to the cytoplasm. It carries out the reaction Exonucleolytic cleavage in either 5'- to 3'- or 3'- to 5'-direction to yield nucleoside 5'-phosphates.. Bidirectionally degrades single-stranded DNA into large acid-insoluble oligonucleotides, which are then degraded further into small acid-soluble oligonucleotides. In Ruegeria pomeroyi (strain ATCC 700808 / DSM 15171 / DSS-3) (Silicibacter pomeroyi), this protein is Exodeoxyribonuclease 7 small subunit.